Here is a 487-residue protein sequence, read N- to C-terminus: uncharacterized protein (487 aa).

The next 3 membrane-spanning stretches (helical) occupy residues 10 to 30 (AALM…AADA), 45 to 65 (VISP…AVAA), and 439 to 459 (APVV…DFTL).

It is found in the cell membrane. This is an uncharacterized protein from Mycobacterium tuberculosis (strain CDC 1551 / Oshkosh).